Reading from the N-terminus, the 108-residue chain is Circadian clock oscillator protein KaiB (108 aa).

Belongs to the KaiB family. Homodimer, interacts with KaiC. The KaiABC complex composition changes during the circadian cycle to control KaiC phosphorylation. Complexes KaiC(6), KaiA(2-4):KaiC(6), KaiB(6):KaiC(6) and KaiC(6):KaiB(6):KaiA(12) are among the most important forms, many form cooperatively. Undergoes a major conformational rearrangment; in the free state forms homotetramers as a dimer of dimers. When bound to the CI domain of KaiC switches to a monomeric thioredoxin-fold (KaiB(fs)). KaiB(fs) binds CikA, leading it to dephosphorylate phospho-RpaA.

In terms of biological role, key component of the KaiABC oscillator complex, which constitutes the main circadian regulator in cyanobacteria. Complex composition changes during the circadian cycle to control KaiC phosphorylation. KaiA stimulates KaiC autophosphorylation, while KaiB sequesters KaiA, leading to KaiC autodephosphorylation. Phospho-Ser-431 KaiC accumulation triggers binding of KaiB to form the KaiB(6):KaiC(6) complex, leading to changes in output regulators CikA and SasA. KaiB switches to a thioredoxin-like fold (KaiB(fs)) when bound to KaiC. KaiB(6):KaiC(6) formation exposes a site for KaiA binding that sequesters KaiA from KaiC, making the KaiC(6):KaiB(6):KaiA(12) complex that results in KaiC autodephosphorylation. A metamorphic protein which reversibly switches between an inactive tetrameric fold and a rare, thioredoxin-like monomeric fold (KaiB(fs)). KaiB(fs) binds phospho-KaiC, KaiA and CikA. KaiA and CikA compete for binding to KaiB(fs), and KaiB(fs) and SasA compete for binding to KaiC, thus the clock oscillator and output signal pathway are tightly coupled. The sequence is that of Circadian clock oscillator protein KaiB from Nostoc sp. (strain PCC 7120 / SAG 25.82 / UTEX 2576).